We begin with the raw amino-acid sequence, 724 residues long: Actin-related protein 5 (724 aa).

3 disordered regions span residues 358 to 391, 412 to 450, and 467 to 488; these read QSLRKARGEPKNEPAEYEENPDSLNNEKYPLMNV, TTAEGRLRARQKRNEEELEKEKRNQLEEERRRENPESYL, and KKRLKTNGSSNGNNKSGGIGRG. Positions 414–446 are enriched in basic and acidic residues; sequence AEGRLRARQKRNEEELEKEKRNQLEEERRRENP. Serine 542 carries the post-translational modification Phosphoserine.

This sequence belongs to the actin family. ARP5 subfamily. In terms of assembly, component of the INO80 chromatin-remodeling complex. Interacts with EEN. In terms of tissue distribution, expressed ubiquitously in seedlings, roots, leaves, buds, flowers and siliques.

The protein localises to the nucleus. The protein resides in the nucleoplasm. Its subcellular location is the cytoplasm. In terms of biological role, probable subunit of a chromatin-remodeling complex. Involved in DNA repair. Required for multicellular development of all organs. The sequence is that of Actin-related protein 5 from Arabidopsis thaliana (Mouse-ear cress).